The sequence spans 279 residues: NH(3)-dependent NAD(+) synthetase (279 aa).

46–53 (GVSGGQDS) contacts ATP. Asp-52 contributes to the Mg(2+) binding site. Arg-139 provides a ligand contact to deamido-NAD(+). Residue Thr-159 participates in ATP binding. A Mg(2+)-binding site is contributed by Glu-164. The deamido-NAD(+) site is built by Lys-172 and Asp-179. Lys-188 and Thr-210 together coordinate ATP. 259–260 (HK) contacts deamido-NAD(+).

Belongs to the NAD synthetase family. Homodimer.

The catalysed reaction is deamido-NAD(+) + NH4(+) + ATP = AMP + diphosphate + NAD(+) + H(+). Its pathway is cofactor biosynthesis; NAD(+) biosynthesis; NAD(+) from deamido-NAD(+) (ammonia route): step 1/1. Catalyzes the ATP-dependent amidation of deamido-NAD to form NAD. Uses ammonia as a nitrogen source. The polypeptide is NH(3)-dependent NAD(+) synthetase (Leifsonia xyli subsp. xyli (strain CTCB07)).